The primary structure comprises 355 residues: F-box only protein 32 (355 aa).

Positions 62 to 67 (KKRKKD) match the Nuclear localization signal motif. The short motif at 169–173 (LLQTL) is the Nuclear export signal element. One can recognise an F-box domain in the interval 223-271 (LTFTDLPLCLQLNIMQRLSDGRDLVSLGQVAPDLHVLSEDRLLWKKLCQ). Residues 280-295 (RKRLILSDKGQLDWKK) carry the Bipartite nuclear localization signal motif.

In terms of assembly, part of the SCF (SKP1-CUL1-F-box) E3 ubiquitin-protein ligase complex SCF(FBXO32) formed of CUL1, SKP1, RBX1 and FBXO32.

It localises to the cytoplasm. The protein resides in the nucleus. It participates in protein modification; protein ubiquitination. Substrate recognition component of a SCF (SKP1-CUL1-F-box protein) E3 ubiquitin-protein ligase complex which mediates the ubiquitination and subsequent proteasomal degradation of target proteins. Probably recognizes and binds to phosphorylated target proteins during skeletal muscle atrophy. Recognizes TERF1. This is F-box only protein 32 (FBXO32) from Sus scrofa (Pig).